The primary structure comprises 512 residues: Cobyric acid synthase (512 aa).

Residues Ala251–Phe451 enclose the GATase cobBQ-type domain. The Nucleophile role is filled by Cys332. His443 is a catalytic residue.

It belongs to the CobB/CobQ family. CobQ subfamily.

The protein operates within cofactor biosynthesis; adenosylcobalamin biosynthesis. In terms of biological role, catalyzes amidations at positions B, D, E, and G on adenosylcobyrinic A,C-diamide. NH(2) groups are provided by glutamine, and one molecule of ATP is hydrogenolyzed for each amidation. This chain is Cobyric acid synthase, found in Yersinia enterocolitica serotype O:8 / biotype 1B (strain NCTC 13174 / 8081).